The primary structure comprises 322 residues: tRNA-dihydrouridine(16) synthase (322 aa).

FMN-binding positions include 8 to 10 (PME) and glutamine 69. Cysteine 99 (proton donor) is an active-site residue. FMN is bound by residues lysine 140, 200-202 (NGD), and 224-225 (GR).

Belongs to the Dus family. DusC subfamily. It depends on FMN as a cofactor.

It carries out the reaction 5,6-dihydrouridine(16) in tRNA + NADP(+) = uridine(16) in tRNA + NADPH + H(+). The catalysed reaction is 5,6-dihydrouridine(16) in tRNA + NAD(+) = uridine(16) in tRNA + NADH + H(+). Its function is as follows. Catalyzes the synthesis of 5,6-dihydrouridine (D), a modified base found in the D-loop of most tRNAs, via the reduction of the C5-C6 double bond in target uridines. Specifically modifies U16 in tRNAs. This is tRNA-dihydrouridine(16) synthase from Cupriavidus necator (strain ATCC 17699 / DSM 428 / KCTC 22496 / NCIMB 10442 / H16 / Stanier 337) (Ralstonia eutropha).